A 1019-amino-acid chain; its full sequence is Alpha-mannosidase At3g26720 (1019 aa).

The first 22 residues, 1 to 22, serve as a signal peptide directing secretion; sequence MAVKCFSLYLILAAIVIGGVTS. 2 residues coordinate Zn(2+): histidine 47 and aspartate 49. Residue asparagine 64 is glycosylated (N-linked (GlcNAc...) asparagine). Aspartate 169 is a binding site for Zn(2+). N-linked (GlcNAc...) asparagine glycans are attached at residues asparagine 278 and asparagine 336. Position 410 (histidine 410) interacts with Zn(2+). Residues cysteine 466 and cysteine 474 are joined by a disulfide bond. N-linked (GlcNAc...) asparagine glycans are attached at residues asparagine 470, asparagine 638, asparagine 730, and asparagine 820. Residues cysteine 824 and cysteine 829 are joined by a disulfide bond.

The protein belongs to the glycosyl hydrolase 38 family. Homodimer. Requires Zn(2+) as cofactor.

It carries out the reaction Hydrolysis of terminal, non-reducing alpha-D-mannose residues in alpha-D-mannosides.. In terms of biological role, liberates mannose from p-nitrophenyl-alpha-D-mannoside in vitro. This is Alpha-mannosidase At3g26720 from Arabidopsis thaliana (Mouse-ear cress).